Consider the following 335-residue polypeptide: Holliday junction branch migration complex subunit RuvB (335 aa).

Residues 1 to 181 are large ATPase domain (RuvB-L); sequence MTRILDNDLI…FGITGHMEYY (181 aa). ATP is bound by residues leucine 20, arginine 21, glycine 62, lysine 65, threonine 66, threonine 67, 128–130, arginine 171, tyrosine 181, and arginine 218; that span reads EDF. Threonine 66 is a Mg(2+) binding site. Residues 182 to 252 form a small ATPAse domain (RuvB-S) region; the sequence is QTADLTEIVE…ITDKALTMLD (71 aa). Positions 255-335 are head domain (RuvB-H); the sequence is QEGLDYVDQK…GYPYEKTIKT (81 aa). Residues arginine 291, arginine 310, arginine 312, and arginine 315 each coordinate DNA.

This sequence belongs to the RuvB family. Homohexamer. Forms an RuvA(8)-RuvB(12)-Holliday junction (HJ) complex. HJ DNA is sandwiched between 2 RuvA tetramers; dsDNA enters through RuvA and exits via RuvB. An RuvB hexamer assembles on each DNA strand where it exits the tetramer. Each RuvB hexamer is contacted by two RuvA subunits (via domain III) on 2 adjacent RuvB subunits; this complex drives branch migration. In the full resolvosome a probable DNA-RuvA(4)-RuvB(12)-RuvC(2) complex forms which resolves the HJ.

It localises to the cytoplasm. It catalyses the reaction ATP + H2O = ADP + phosphate + H(+). Its function is as follows. The RuvA-RuvB-RuvC complex processes Holliday junction (HJ) DNA during genetic recombination and DNA repair, while the RuvA-RuvB complex plays an important role in the rescue of blocked DNA replication forks via replication fork reversal (RFR). RuvA specifically binds to HJ cruciform DNA, conferring on it an open structure. The RuvB hexamer acts as an ATP-dependent pump, pulling dsDNA into and through the RuvAB complex. RuvB forms 2 homohexamers on either side of HJ DNA bound by 1 or 2 RuvA tetramers; 4 subunits per hexamer contact DNA at a time. Coordinated motions by a converter formed by DNA-disengaged RuvB subunits stimulates ATP hydrolysis and nucleotide exchange. Immobilization of the converter enables RuvB to convert the ATP-contained energy into a lever motion, pulling 2 nucleotides of DNA out of the RuvA tetramer per ATP hydrolyzed, thus driving DNA branch migration. The RuvB motors rotate together with the DNA substrate, which together with the progressing nucleotide cycle form the mechanistic basis for DNA recombination by continuous HJ branch migration. Branch migration allows RuvC to scan DNA until it finds its consensus sequence, where it cleaves and resolves cruciform DNA. This is Holliday junction branch migration complex subunit RuvB from Streptococcus equi subsp. equi (strain 4047).